A 458-amino-acid polypeptide reads, in one-letter code: Cysteine--tRNA ligase (458 aa).

Position 27 (cysteine 27) interacts with Zn(2+). The short motif at 29-39 is the 'HIGH' region element; sequence ITPQSEPHIGH. Zn(2+) is bound by residues cysteine 207, histidine 232, and glutamate 236. Positions 265 to 269 match the 'KMSKS' region motif; that stretch reads KMSKS. Lysine 268 provides a ligand contact to ATP.

This sequence belongs to the class-I aminoacyl-tRNA synthetase family. In terms of assembly, monomer. The cofactor is Zn(2+).

It localises to the cytoplasm. The catalysed reaction is tRNA(Cys) + L-cysteine + ATP = L-cysteinyl-tRNA(Cys) + AMP + diphosphate. In Dehalococcoides mccartyi (strain ATCC BAA-2266 / KCTC 15142 / 195) (Dehalococcoides ethenogenes (strain 195)), this protein is Cysteine--tRNA ligase.